The chain runs to 400 residues: Enoyl-[acyl-carrier-protein] reductase [NADH] (400 aa).

NAD(+) is bound by residues 48-53, 74-75, 111-112, and 139-140; these read GSSSGY, FE, DA, and LA. Tyrosine 225 contributes to the substrate binding site. Tyrosine 235 serves as the catalytic Proton donor. NAD(+) is bound by residues lysine 244 and 273–275; that span reads VVT.

Belongs to the TER reductase family. As to quaternary structure, monomer.

It carries out the reaction a 2,3-saturated acyl-[ACP] + NAD(+) = a (2E)-enoyl-[ACP] + NADH + H(+). It participates in lipid metabolism; fatty acid biosynthesis. Its function is as follows. Involved in the final reduction of the elongation cycle of fatty acid synthesis (FAS II). Catalyzes the reduction of a carbon-carbon double bond in an enoyl moiety that is covalently linked to an acyl carrier protein (ACP). In Aliivibrio fischeri (strain MJ11) (Vibrio fischeri), this protein is Enoyl-[acyl-carrier-protein] reductase [NADH].